The primary structure comprises 381 residues: O-phospho-L-seryl-tRNA:Cys-tRNA synthase (381 aa).

Pyridoxal 5'-phosphate is bound by residues 86–87 (AR), Asn192, and 215–217 (SGH). Lys218 carries the N6-(pyridoxal phosphate)lysine modification.

This sequence belongs to the SepCysS family. Homodimer. Interacts with SepRS. The cofactor is pyridoxal 5'-phosphate.

It catalyses the reaction O-phospho-L-seryl-tRNA(Cys) + hydrogen sulfide + H(+) = L-cysteinyl-tRNA(Cys) + phosphate. Functionally, converts O-phospho-L-seryl-tRNA(Cys) (Sep-tRNA(Cys)) to L-cysteinyl-tRNA(Cys) (Cys-tRNA(Cys)). The sequence is that of O-phospho-L-seryl-tRNA:Cys-tRNA synthase from Methanococcus vannielii (strain ATCC 35089 / DSM 1224 / JCM 13029 / OCM 148 / SB).